Reading from the N-terminus, the 137-residue chain is Ribosome-binding factor A (137 aa).

It belongs to the RbfA family. As to quaternary structure, monomer. Binds 30S ribosomal subunits, but not 50S ribosomal subunits or 70S ribosomes.

The protein resides in the cytoplasm. One of several proteins that assist in the late maturation steps of the functional core of the 30S ribosomal subunit. Associates with free 30S ribosomal subunits (but not with 30S subunits that are part of 70S ribosomes or polysomes). Required for efficient processing of 16S rRNA. May interact with the 5'-terminal helix region of 16S rRNA. In Rhodopseudomonas palustris (strain TIE-1), this protein is Ribosome-binding factor A.